The sequence spans 435 residues: NADH-ubiquinone oxidoreductase chain 4 (435 aa).

A run of 13 helical transmembrane segments spans residues 27–47, 53–73, 80–100, 102–122, 132–152, 177–197, 206–226, 239–259, 267–285, 295–317, 324–344, 372–394, and 414–434; these read VLTI…ELNG, FVMG…YLSS, ASFN…FSVS, FFLF…LIVG, AGGY…WGVS, LWWL…FHLW, PVAG…YGLL, VFFV…GLAC, CLVA…LGVL, AIII…NAIY, LLVM…MCFL, SXAF…LYLY, and LCDV…FMFM.

It belongs to the complex I subunit 4 family.

It is found in the mitochondrion membrane. It catalyses the reaction a ubiquinone + NADH + 5 H(+)(in) = a ubiquinol + NAD(+) + 4 H(+)(out). In terms of biological role, core subunit of the mitochondrial membrane respiratory chain NADH dehydrogenase (Complex I) that is believed to belong to the minimal assembly required for catalysis. Complex I functions in the transfer of electrons from NADH to the respiratory chain. The immediate electron acceptor for the enzyme is believed to be ubiquinone. This chain is NADH-ubiquinone oxidoreductase chain 4 (ND4), found in Mytilus edulis (Blue mussel).